The following is a 242-amino-acid chain: Agamous-like MADS-box protein MADS4 (242 aa).

An MADS-box domain is found at 1–61; the sequence is MGRGRVELKR…GKLYEFCSSS (61 aa). Positions 89–185 constitute a K-box domain; sequence ELSSQQEYLK…GTQVNQLQWN (97 aa).

In terms of tissue distribution, expressed in flowers and seeds.

It localises to the nucleus. Its function is as follows. Probable transcription factor involved in flower development. The sequence is that of Agamous-like MADS-box protein MADS4 from Vitis vinifera (Grape).